The chain runs to 430 residues: MELLHSINDFNEAKQVIAGGVNSPVRAFKSVKGTPPFILKGKGAYLYDVDNNHYIDFVQSWGPLIFGHADEEIEENIINTLKKGTSFGAPTELETTLAKEIISCYEGLDKVRLVNSGTEATMSAIRLARAYSQKDDLIKFEGCYHGHSDSLLVKAGSGCVTFGSPSSLGVPNDFSKHTLVARYNDLNSTEECFKKGNVGCVIIEPIAGNMGLVPAQKEFLLGLKALCEKYQAVLILDEVMSGFRASLSGSQEFYGVVPDLVTFGKVIGAGLPLACFGGRAEIMDLLSPIGGVYQAGTLSGNPLAVCAGLSALYKIKRDKTLYTRLNALAIRLTQGLKKSAQSYNIALETLNRGSMFGFFFNENAVCDFDDALKSDTEMFAKFHQKMLFKGVYLACSSFETGFICEPMTEEMIDLVVAKADESFDEIIKGV.

The residue at position 265 (Lys265) is an N6-(pyridoxal phosphate)lysine.

It belongs to the class-III pyridoxal-phosphate-dependent aminotransferase family. HemL subfamily. Homodimer. The cofactor is pyridoxal 5'-phosphate.

Its subcellular location is the cytoplasm. The catalysed reaction is (S)-4-amino-5-oxopentanoate = 5-aminolevulinate. It participates in porphyrin-containing compound metabolism; protoporphyrin-IX biosynthesis; 5-aminolevulinate from L-glutamyl-tRNA(Glu): step 2/2. The sequence is that of Glutamate-1-semialdehyde 2,1-aminomutase from Helicobacter pylori (strain HPAG1).